Consider the following 206-residue polypeptide: tRNA(Phe) 7-((3-amino-3-carboxypropyl)-4-demethylwyosine(37)-N(4))-methyltransferase 2 (206 aa).

Belongs to the TYW3 family.

It carries out the reaction 4-demethyl-7-[(3S)-3-amino-3-carboxypropyl]wyosine(37) in tRNA(Phe) + S-adenosyl-L-methionine = 7-[(3S)-3-amino-3-carboxypropyl]wyosine(37) in tRNA(Phe) + S-adenosyl-L-homocysteine + H(+). Its function is as follows. S-adenosyl-L-methionine-dependent methyltransferase that acts as a component of the wyosine derivatives biosynthesis pathway. Probably methylates N-4 position of wybutosine-86 to produce wybutosine-72. The polypeptide is tRNA(Phe) 7-((3-amino-3-carboxypropyl)-4-demethylwyosine(37)-N(4))-methyltransferase 2 (Pyrococcus furiosus (strain ATCC 43587 / DSM 3638 / JCM 8422 / Vc1)).